We begin with the raw amino-acid sequence, 345 residues long: Uroporphyrinogen decarboxylase (345 aa).

Substrate is bound by residues Arg27 to Arg31, Phe46, Asp76, Tyr152, Ser207, and His321.

This sequence belongs to the uroporphyrinogen decarboxylase family. As to quaternary structure, homodimer.

The protein resides in the cytoplasm. The enzyme catalyses uroporphyrinogen III + 4 H(+) = coproporphyrinogen III + 4 CO2. It functions in the pathway porphyrin-containing compound metabolism; protoporphyrin-IX biosynthesis; coproporphyrinogen-III from 5-aminolevulinate: step 4/4. Functionally, catalyzes the decarboxylation of four acetate groups of uroporphyrinogen-III to yield coproporphyrinogen-III. The polypeptide is Uroporphyrinogen decarboxylase (Staphylococcus aureus (strain MRSA252)).